The sequence spans 42 residues: Large ribosomal subunit protein bL36 (42 aa).

The protein belongs to the bacterial ribosomal protein bL36 family.

This chain is Large ribosomal subunit protein bL36, found in Anaplasma marginale (strain St. Maries).